A 150-amino-acid chain; its full sequence is Peptide deformylase 2 (150 aa).

Cys89 and His131 together coordinate Fe cation. Residue Glu132 is part of the active site. Position 135 (His135) interacts with Fe cation.

Belongs to the polypeptide deformylase family. Requires Fe(2+) as cofactor.

The enzyme catalyses N-terminal N-formyl-L-methionyl-[peptide] + H2O = N-terminal L-methionyl-[peptide] + formate. In terms of biological role, removes the formyl group from the N-terminal Met of newly synthesized proteins. Requires at least a dipeptide for an efficient rate of reaction. N-terminal L-methionine is a prerequisite for activity but the enzyme has broad specificity at other positions. This is Peptide deformylase 2 from Clostridium acetobutylicum (strain ATCC 824 / DSM 792 / JCM 1419 / IAM 19013 / LMG 5710 / NBRC 13948 / NRRL B-527 / VKM B-1787 / 2291 / W).